Reading from the N-terminus, the 243-residue chain is Probable transcriptional regulatory protein Bpet3099 (243 aa).

The tract at residues 1-21 (MAGHSKWANIQHRKGRQDAKR) is disordered.

This sequence belongs to the TACO1 family.

Its subcellular location is the cytoplasm. The sequence is that of Probable transcriptional regulatory protein Bpet3099 from Bordetella petrii (strain ATCC BAA-461 / DSM 12804 / CCUG 43448).